The chain runs to 234 residues: Lipoprotein-releasing system ATP-binding protein LolD 1 (234 aa).

The 227-residue stretch at 5–231 (IEARGIEKVF…RLTSNVRDPG (227 aa)) folds into the ABC transporter domain. 41–48 (GASGSGKS) contributes to the ATP binding site.

The protein belongs to the ABC transporter superfamily. Lipoprotein translocase (TC 3.A.1.125) family. The complex is composed of two ATP-binding proteins (LolD) and two transmembrane proteins (LolC and LolE).

The protein localises to the cell inner membrane. In terms of biological role, part of the ABC transporter complex LolCDE involved in the translocation of mature outer membrane-directed lipoproteins, from the inner membrane to the periplasmic chaperone, LolA. Responsible for the formation of the LolA-lipoprotein complex in an ATP-dependent manner. The protein is Lipoprotein-releasing system ATP-binding protein LolD 1 of Caulobacter vibrioides (strain ATCC 19089 / CIP 103742 / CB 15) (Caulobacter crescentus).